A 295-amino-acid polypeptide reads, in one-letter code: Glycine N-acyltransferase-like protein Keg1 (295 aa).

N6-acetyllysine; alternate is present on lysine 41. Position 41 is an N6-succinyllysine; alternate (lysine 41). An N6-acetyllysine modification is found at lysine 43. Lysine 48 is subject to N6-acetyllysine; alternate. Lysine 48 bears the N6-succinyllysine; alternate mark. An N6-acetyllysine mark is found at lysine 80 and lysine 83. N6-acetyllysine; alternate occurs at positions 124, 128, and 140. N6-succinyllysine; alternate occurs at positions 124, 128, and 140. Lysine 150 is subject to N6-acetyllysine. At lysine 255 the chain carries N6-acetyllysine; alternate. Residue lysine 255 is modified to N6-succinyllysine; alternate.

It belongs to the glycine N-acyltransferase family. Binds to microtubules. As to expression, specifically expressed in kidney and liver. Up-regulated in the regenerating liver as well as in hepatocellular carcinoma.

It is found in the cytoplasm. The protein resides in the cytoskeleton. The protein localises to the microtubule organizing center. It localises to the centrosome. The enzyme catalyses an acyl-CoA + glycine = an N-acylglycine + CoA + H(+). In terms of biological role, acyltransferase which transfers the acyl group to the N-terminus of glycine. Can conjugate a multitude of substrates to form a variety of N-acylglycines. In Rattus norvegicus (Rat), this protein is Glycine N-acyltransferase-like protein Keg1 (Keg1).